Here is a 980-residue protein sequence, read N- to C-terminus: Macrophage colony-stimulating factor 1 receptor (980 aa).

A signal peptide spans Met1 to Gly19. Residues Val20–Pro514 are Extracellular-facing. Ig-like C2-type domains follow at residues Pro21–Tyr100, Pro107–Lys197, Pro202–Glu297, Ala299–Arg397, and Pro400–Ser499. The cysteines at positions 42 and 84 are disulfide-linked. N-linked (GlcNAc...) asparagine glycosylation is found at Asn45, Asn73, Asn94, Asn153, Asn275, Asn286, Asn302, Asn335, Asn410, Asn477, and Asn490. 2 disulfides stabilise this stretch: Cys127–Cys177 and Cys224–Cys278. Cysteines 417 and 482 form a disulfide. A helical membrane pass occupies residues Val515–Tyr535. Topologically, residues Lys536–Cys980 are cytoplasmic. The tract at residues Gln539–Lys571 is regulatory juxtamembrane domain. Residues Tyr543 and Tyr558 each carry the phosphotyrosine; by autocatalysis modification. In terms of domain architecture, Protein kinase spans Leu579 to Leu908. ATP is bound by residues Leu585–Val593 and Lys613. Tyr696 and Tyr705 each carry phosphotyrosine; by autocatalysis. Residue Ser710 is modified to Phosphoserine. Tyr720 is subject to Phosphotyrosine; by autocatalysis. The segment at Met723 to Glu743 is disordered. Asp776 functions as the Proton acceptor in the catalytic mechanism. The activation loop stretch occupies residues Asp794–Pro816. 2 positions are modified to phosphotyrosine; by autocatalysis: Tyr807 and Tyr921. The interval Val918–Leu959 is disordered. Low complexity predominate over residues Ser926–Thr940. Tyr977 carries the phosphotyrosine; by autocatalysis modification.

It belongs to the protein kinase superfamily. Tyr protein kinase family. CSF-1/PDGF receptor subfamily. In terms of assembly, monomer. Homodimer. Interacts with CSF1 and IL34. Interaction with dimeric CSF1 or IL34 leads to receptor homodimerization. Interacts with INPPL1/SHIP2 and THOC5. Interacts (tyrosine phosphorylated) with PLCG2 (via SH2 domain). Interacts (tyrosine phosphorylated) with PIK3R1 (via SH2 domain). Interacts (tyrosine phosphorylated) with FYN, YES1 and SRC (via SH2 domain). Interacts (tyrosine phosphorylated) with CBL, GRB2 and SLA2. Post-translationally, autophosphorylated in response to CSF1 or IL34 binding. Phosphorylation at Tyr-558 is important for normal down-regulation of signaling by ubiquitination, internalization and degradation. Phosphorylation at Tyr-558 and Tyr-807 is important for interaction with SRC family members, including FYN, YES1 and SRC, and for subsequent activation of these protein kinases. Phosphorylation at Tyr-696 and Tyr-921 is important for interaction with GRB2. Phosphorylation at Tyr-720 is important for interaction with PIK3R1. Phosphorylation at Tyr-720 and Tyr-807 is important for interaction with PLCG2. Phosphorylation at Tyr-977 is important for interaction with CBL. Dephosphorylation by PTPN2 negatively regulates downstream signaling and macrophage differentiation. Ubiquitinated. Becomes rapidly polyubiquitinated after autophosphorylation, leading to its degradation.

Its subcellular location is the cell membrane. It catalyses the reaction L-tyrosyl-[protein] + ATP = O-phospho-L-tyrosyl-[protein] + ADP + H(+). Present in an inactive conformation in the absence of bound ligand. CSF1 or IL34 binding leads to dimerization and activation by autophosphorylation on tyrosine residues. In terms of biological role, tyrosine-protein kinase that acts as a cell-surface receptor for CSF1 and IL34 and plays an essential role in the regulation of survival, proliferation and differentiation of hematopoietic precursor cells, especially mononuclear phagocytes, such as macrophages and monocytes. Promotes the release of pro-inflammatory chemokines in response to IL34 and CSF1, and thereby plays an important role in innate immunity and in inflammatory processes. Plays an important role in the regulation of osteoclast proliferation and differentiation, the regulation of bone resorption, and is required for normal bone and tooth development. Required for normal male and female fertility, and for normal development of milk ducts and acinar structures in the mammary gland during pregnancy. Promotes reorganization of the actin cytoskeleton, regulates formation of membrane ruffles, cell adhesion and cell migration, and promotes cancer cell invasion. Activates several signaling pathways in response to ligand binding, including the ERK1/2 and the JNK pathway. Phosphorylates PIK3R1, PLCG2, GRB2, SLA2 and CBL. Activation of PLCG2 leads to the production of the cellular signaling molecules diacylglycerol and inositol 1,4,5-trisphosphate, that then lead to the activation of protein kinase C family members, especially PRKCD. Phosphorylation of PIK3R1, the regulatory subunit of phosphatidylinositol 3-kinase, leads to activation of the AKT1 signaling pathway. Activated CSF1R also mediates activation of the MAP kinases MAPK1/ERK2 and/or MAPK3/ERK1, and of the SRC family kinases SRC, FYN and YES1. Activated CSF1R transmits signals both via proteins that directly interact with phosphorylated tyrosine residues in its intracellular domain, or via adapter proteins, such as GRB2. Promotes activation of STAT family members STAT3, STAT5A and/or STAT5B. Promotes tyrosine phosphorylation of SHC1 and INPP5D/SHIP-1. Receptor signaling is down-regulated by protein phosphatases, such as INPP5D/SHIP-1, that dephosphorylate the receptor and its downstream effectors, and by rapid internalization of the activated receptor. In the central nervous system, may play a role in the development of microglia macrophages. The polypeptide is Macrophage colony-stimulating factor 1 receptor (CSF1R) (Felis catus (Cat)).